Consider the following 641-residue polypeptide: Phosphomethylpyrimidine synthase (641 aa).

A compositionally biased stretch (polar residues) spans 1–13 (MNIRSNPDTTRPA). The disordered stretch occupies residues 1-21 (MNIRSNPDTTRPAVTTGGLPS). Substrate contacts are provided by residues Asn-221, Met-250, Tyr-279, His-315, 335–337 (SRG), 376–379 (DGLR), and Glu-415. Residue His-419 coordinates Zn(2+). Residue Tyr-442 participates in substrate binding. His-483 provides a ligand contact to Zn(2+). Positions 563, 566, and 571 each coordinate [4Fe-4S] cluster.

It belongs to the ThiC family. As to quaternary structure, homodimer. The cofactor is [4Fe-4S] cluster.

It carries out the reaction 5-amino-1-(5-phospho-beta-D-ribosyl)imidazole + S-adenosyl-L-methionine = 4-amino-2-methyl-5-(phosphooxymethyl)pyrimidine + CO + 5'-deoxyadenosine + formate + L-methionine + 3 H(+). The protein operates within cofactor biosynthesis; thiamine diphosphate biosynthesis. Catalyzes the synthesis of the hydroxymethylpyrimidine phosphate (HMP-P) moiety of thiamine from aminoimidazole ribotide (AIR) in a radical S-adenosyl-L-methionine (SAM)-dependent reaction. The chain is Phosphomethylpyrimidine synthase from Rhodopseudomonas palustris (strain BisB5).